A 102-amino-acid chain; its full sequence is Urease subunit beta (102 aa).

The protein belongs to the urease beta subunit family. Heterotrimer of UreA (gamma), UreB (beta) and UreC (alpha) subunits. Three heterotrimers associate to form the active enzyme.

Its subcellular location is the cytoplasm. It carries out the reaction urea + 2 H2O + H(+) = hydrogencarbonate + 2 NH4(+). Its pathway is nitrogen metabolism; urea degradation; CO(2) and NH(3) from urea (urease route): step 1/1. The protein is Urease subunit beta of Alteromonas mediterranea (strain DSM 17117 / CIP 110805 / LMG 28347 / Deep ecotype).